The chain runs to 215 residues: Leucyl/phenylalanyl-tRNA--protein transferase (215 aa).

It belongs to the L/F-transferase family.

It is found in the cytoplasm. The enzyme catalyses N-terminal L-lysyl-[protein] + L-leucyl-tRNA(Leu) = N-terminal L-leucyl-L-lysyl-[protein] + tRNA(Leu) + H(+). The catalysed reaction is N-terminal L-arginyl-[protein] + L-leucyl-tRNA(Leu) = N-terminal L-leucyl-L-arginyl-[protein] + tRNA(Leu) + H(+). It carries out the reaction L-phenylalanyl-tRNA(Phe) + an N-terminal L-alpha-aminoacyl-[protein] = an N-terminal L-phenylalanyl-L-alpha-aminoacyl-[protein] + tRNA(Phe). In terms of biological role, functions in the N-end rule pathway of protein degradation where it conjugates Leu, Phe and, less efficiently, Met from aminoacyl-tRNAs to the N-termini of proteins containing an N-terminal arginine or lysine. The chain is Leucyl/phenylalanyl-tRNA--protein transferase from Campylobacter jejuni subsp. jejuni serotype O:6 (strain 81116 / NCTC 11828).